Reading from the N-terminus, the 525-residue chain is GMP synthase [glutamine-hydrolyzing] (525 aa).

Positions 9–207 (RILILDFGSQ…ILDICGCEAL (199 aa)) constitute a Glutamine amidotransferase type-1 domain. Cys86 acts as the Nucleophile in catalysis. Active-site residues include His181 and Glu183. Residues 208-400 (WTPSKIAEDA…LGLPYDMVYR (193 aa)) enclose the GMPS ATP-PPase domain. 235-241 (SGGVDSS) is a binding site for ATP.

Homodimer.

The enzyme catalyses XMP + L-glutamine + ATP + H2O = GMP + L-glutamate + AMP + diphosphate + 2 H(+). Its pathway is purine metabolism; GMP biosynthesis; GMP from XMP (L-Gln route): step 1/1. Its function is as follows. Catalyzes the synthesis of GMP from XMP. This Pseudomonas fluorescens (strain ATCC BAA-477 / NRRL B-23932 / Pf-5) protein is GMP synthase [glutamine-hydrolyzing].